The sequence spans 308 residues: Aspartate carbamoyltransferase catalytic subunit (308 aa).

Carbamoyl phosphate-binding residues include Arg-57 and Thr-58. Lys-86 contributes to the L-aspartate binding site. Positions 107, 135, and 138 each coordinate carbamoyl phosphate. Positions 167 and 228 each coordinate L-aspartate. Residues Leu-267 and Pro-268 each contribute to the carbamoyl phosphate site.

It belongs to the aspartate/ornithine carbamoyltransferase superfamily. ATCase family. As to quaternary structure, heterooligomer of catalytic and regulatory chains.

It carries out the reaction carbamoyl phosphate + L-aspartate = N-carbamoyl-L-aspartate + phosphate + H(+). It participates in pyrimidine metabolism; UMP biosynthesis via de novo pathway; (S)-dihydroorotate from bicarbonate: step 2/3. Functionally, catalyzes the condensation of carbamoyl phosphate and aspartate to form carbamoyl aspartate and inorganic phosphate, the committed step in the de novo pyrimidine nucleotide biosynthesis pathway. The chain is Aspartate carbamoyltransferase catalytic subunit from Methanosarcina acetivorans (strain ATCC 35395 / DSM 2834 / JCM 12185 / C2A).